The sequence spans 183 residues: Cell division protein ZapC (183 aa).

Belongs to the ZapC family. As to quaternary structure, interacts directly with FtsZ.

The protein resides in the cytoplasm. Functionally, contributes to the efficiency of the cell division process by stabilizing the polymeric form of the cell division protein FtsZ. Acts by promoting interactions between FtsZ protofilaments and suppressing the GTPase activity of FtsZ. The sequence is that of Cell division protein ZapC from Proteus mirabilis (strain HI4320).